The sequence spans 119 residues: Large ribosomal subunit protein bL20 (119 aa).

Belongs to the bacterial ribosomal protein bL20 family.

In terms of biological role, binds directly to 23S ribosomal RNA and is necessary for the in vitro assembly process of the 50S ribosomal subunit. It is not involved in the protein synthesizing functions of that subunit. This is Large ribosomal subunit protein bL20 from Granulibacter bethesdensis (strain ATCC BAA-1260 / CGDNIH1).